The sequence spans 382 residues: Protein-arginine rhamnosyltransferase (382 aa).

Residue 18-19 coordinates dTDP; that stretch reads FG. Asp20 (proton acceptor) is an active-site residue. DTDP-beta-L-rhamnose contacts are provided by residues Asp20, Tyr187, 250-252, and 268-272; these read VPQ and RGEDS. Residues Tyr187, 250-252, and 268-272 contribute to the dTDP site; these read VPQ and RGEDS. Residue Glu270 is part of the active site.

This sequence belongs to the glycosyltransferase 104 family.

The catalysed reaction is dTDP-beta-L-rhamnose + L-arginyl-[protein] = N(omega)-(alpha-L-rhamnosyl)-L-arginyl-[protein] + dTDP + H(+). Its function is as follows. Protein-arginine rhamnosyltransferase that catalyzes the transfer of a single rhamnose to elongation factor P (EF-P) on 'Lys-32', a modification required for EF-P-dependent rescue of polyproline stalled ribosomes. The polypeptide is Protein-arginine rhamnosyltransferase (Neisseria meningitidis serogroup B / serotype 15 (strain H44/76)).